We begin with the raw amino-acid sequence, 565 residues long: Proline--tRNA ligase (565 aa).

The protein belongs to the class-II aminoacyl-tRNA synthetase family. ProS type 1 subfamily. In terms of assembly, homodimer.

It is found in the cytoplasm. It carries out the reaction tRNA(Pro) + L-proline + ATP = L-prolyl-tRNA(Pro) + AMP + diphosphate. In terms of biological role, catalyzes the attachment of proline to tRNA(Pro) in a two-step reaction: proline is first activated by ATP to form Pro-AMP and then transferred to the acceptor end of tRNA(Pro). As ProRS can inadvertently accommodate and process non-cognate amino acids such as alanine and cysteine, to avoid such errors it has two additional distinct editing activities against alanine. One activity is designated as 'pretransfer' editing and involves the tRNA(Pro)-independent hydrolysis of activated Ala-AMP. The other activity is designated 'posttransfer' editing and involves deacylation of mischarged Ala-tRNA(Pro). The misacylated Cys-tRNA(Pro) is not edited by ProRS. The sequence is that of Proline--tRNA ligase from Francisella philomiragia subsp. philomiragia (strain ATCC 25017 / CCUG 19701 / FSC 153 / O#319-036).